Here is an 868-residue protein sequence, read N- to C-terminus: LPS-assembly protein LptD (868 aa).

A signal peptide spans 1–24; the sequence is MLKGIHKYLLMCFGTVLFTVQANA.

It belongs to the LptD family. As to quaternary structure, component of the lipopolysaccharide transport and assembly complex. Interacts with LptE and LptA.

Its subcellular location is the cell outer membrane. Together with LptE, is involved in the assembly of lipopolysaccharide (LPS) at the surface of the outer membrane. The chain is LPS-assembly protein LptD from Francisella tularensis subsp. novicida (strain U112).